A 272-amino-acid chain; its full sequence is Insulin-like growth factor-binding protein 1 (272 aa).

An N-terminal signal peptide occupies residues 1-25; it reads MPEFLTVVSWPFLILLSFQIGVAAG. The IGFBP N-terminal domain maps to 28-109; sequence QPWHCAPCTA…TRGQGACVPE (82 aa). Disulfide bonds link cysteine 32–cysteine 59, cysteine 35–cysteine 61, cysteine 43–cysteine 62, cysteine 50–cysteine 65, cysteine 73–cysteine 86, and cysteine 80–cysteine 106. Phosphoserine is present on residues serine 139, serine 157, and serine 169. At threonine 170 the chain carries Phosphothreonine. Tyrosine 171 is subject to Phosphotyrosine. Positions 186–264 constitute a Thyroglobulin type-1 domain; that stretch reads KEPCQRELYK…SLETRGDPNC (79 aa). 3 cysteine pairs are disulfide-bonded: cysteine 189/cysteine 219, cysteine 230/cysteine 241, and cysteine 243/cysteine 264. Position 255 is a phosphoserine (serine 255). A Cell attachment site motif is present at residues 259–261; the sequence is RGD.

In terms of assembly, binds equally well IGF1 and IGF2. Interacts with integrin ITGA5:ITGB1. Interacts with VHL; this interaction inhibits HIF1A degradation.

Its subcellular location is the secreted. Its function is as follows. Multifunctional protein that plays a critical role in regulating the availability of IGFs such as IGF1 and IGF2 to their receptors and thereby regulates IGF-mediated cellular processes including cell migration, proliferation, differentiation or apoptosis in a cell-type specific manner. Also plays a positive role in cell migration by interacting with integrin ITGA5:ITGB1 through its RGD motif. Mechanistically, binding to integrins leads to activation of focal adhesion kinase/PTK2 and stimulation of the mitogen-activated protein kinase (MAPK) pathway. Regulates cardiomyocyte apoptosis by suppressing HIF-1alpha/HIF1A ubiquitination and subsequent degradation. The chain is Insulin-like growth factor-binding protein 1 (Igfbp1) from Mus musculus (Mouse).